Consider the following 165-residue polypeptide: Phosphopantetheine adenylyltransferase (165 aa).

Position 9 (threonine 9) interacts with substrate. Residues 9 to 10 and histidine 17 contribute to the ATP site; that span reads TF. 3 residues coordinate substrate: lysine 41, leucine 73, and arginine 87. ATP contacts are provided by residues 88 to 90, glutamate 98, and 123 to 129; these read GLR and YMFISAT.

This sequence belongs to the bacterial CoaD family. Homohexamer. The cofactor is Mg(2+).

The protein resides in the cytoplasm. The catalysed reaction is (R)-4'-phosphopantetheine + ATP + H(+) = 3'-dephospho-CoA + diphosphate. It participates in cofactor biosynthesis; coenzyme A biosynthesis; CoA from (R)-pantothenate: step 4/5. Functionally, reversibly transfers an adenylyl group from ATP to 4'-phosphopantetheine, yielding dephospho-CoA (dPCoA) and pyrophosphate. This chain is Phosphopantetheine adenylyltransferase, found in Nitrosospira multiformis (strain ATCC 25196 / NCIMB 11849 / C 71).